The chain runs to 223 residues: Ras-related protein Rab-21 (223 aa).

Position 2 is an N-acetylalanine (alanine 2). 10 residues coordinate GTP: glycine 26, glycine 29, lysine 30, threonine 31, serine 32, asparagine 43, aspartate 44, histidine 46, threonine 48, and threonine 49. Threonine 31 provides a ligand contact to Mg(2+). Residues 41–54 carry the Switch 1 motif; it reads KFNDKHITTLQASF. Positions 49 and 72 each coordinate Mg(2+). Positions 74 to 92 match the Switch 2 motif; it reads AGQERFHALGPIYYRDSNG. Residues glycine 75, asparagine 130, lysine 131, aspartate 133, alanine 161, and lysine 162 each contribute to the GTP site. S-geranylgeranyl cysteine attachment occurs at residues cysteine 219 and cysteine 220. Residue cysteine 220 is modified to Cysteine methyl ester. Positions 221–223 are cleaved as a propeptide — removed in mature form; the sequence is SSG.

It belongs to the small GTPase superfamily. Rab family. In terms of assembly, interacts with the cytoplasmic tail of integrins ITGA1, ITGA2, ITGA5, ITGA6, ITGA11 and ITGB1; this interaction is dependent upon its GDP/GTP cycle. Interacts with RABGEF1 (via VPS9 domain). Interacts with ANKRD27. Interacts (in GTP-bound form) with VAMP8 in response to starvation; the interaction probably regulates VAMP8 endolysosomal trafficking. Interacts (active GTP-bound form) with TMED10; the interaction is indirect and regulates TMED10 abundance and localization at the Golgi. Mg(2+) serves as cofactor.

The protein localises to the endoplasmic reticulum membrane. It localises to the golgi apparatus. It is found in the trans-Golgi network. The protein resides in the golgi apparatus membrane. Its subcellular location is the early endosome membrane. The protein localises to the cytoplasmic vesicle membrane. It localises to the cleavage furrow. It is found in the cell projection. The protein resides in the neuron projection. It catalyses the reaction GTP + H2O = GDP + phosphate + H(+). Its activity is regulated as follows. Regulated by guanine nucleotide exchange factors (GEFs) including ANKRD27 and RABGEF1, which promote the exchange of bound GDP for free GTP. Regulated by GTPase activating proteins (GAPs) which increase the GTP hydrolysis activity. Inhibited by GDP dissociation inhibitors (GDIs). Its function is as follows. The small GTPases Rab are key regulators of intracellular membrane trafficking, from the formation of transport vesicles to their fusion with membranes. Rabs cycle between an inactive GDP-bound form and an active GTP-bound form that is able to recruit to membranes different sets of downstream effectors directly responsible for vesicle formation, movement, tethering and fusion. RAB21 is involved in membrane trafficking control. Regulates integrin internalization and recycling, but does not influence the traffic of endosomally translocated receptors in general. As a result, may regulate cell adhesion and migration. During the mitosis of adherent cells, controls the endosomal trafficking of integrins which is required for the successful completion of cytokinesis. Involved in neurite growth. Following SBF2/MTMT13-mediated activation in response to starvation-induced autophagy, binds to and regulates SNARE protein VAMP8 endolysosomal transport required for SNARE-mediated autophagosome-lysosome fusion. Modulates protein levels of the cargo receptors TMED2 and TMED10, and required for appropriate Golgi localization of TMED10. This is Ras-related protein Rab-21 from Rattus norvegicus (Rat).